A 273-amino-acid chain; its full sequence is Orotidine 5'-phosphate decarboxylase (273 aa).

Lys96 (proton donor) is an active-site residue.

This sequence belongs to the OMP decarboxylase family. Type 2 subfamily.

The catalysed reaction is orotidine 5'-phosphate + H(+) = UMP + CO2. Its pathway is pyrimidine metabolism; UMP biosynthesis via de novo pathway; UMP from orotate: step 2/2. This is Orotidine 5'-phosphate decarboxylase from Nocardioides sp. (strain ATCC BAA-499 / JS614).